Consider the following 208-residue polypeptide: UPF0301 protein MAB_4928c (208 aa).

The protein belongs to the UPF0301 (AlgH) family.

The protein is UPF0301 protein MAB_4928c of Mycobacteroides abscessus (strain ATCC 19977 / DSM 44196 / CCUG 20993 / CIP 104536 / JCM 13569 / NCTC 13031 / TMC 1543 / L948) (Mycobacterium abscessus).